The primary structure comprises 159 residues: RNA pyrophosphohydrolase (159 aa).

The region spanning 6 to 149 (GFRPNVGIIL…KREVYRRALK (144 aa)) is the Nudix hydrolase domain. The Nudix box motif lies at 38 to 59 (GGINDRETPEEALYRELNEEVG).

This sequence belongs to the Nudix hydrolase family. RppH subfamily. A divalent metal cation is required as a cofactor.

Accelerates the degradation of transcripts by removing pyrophosphate from the 5'-end of triphosphorylated RNA, leading to a more labile monophosphorylated state that can stimulate subsequent ribonuclease cleavage. The chain is RNA pyrophosphohydrolase from Pseudomonas aeruginosa (strain LESB58).